Consider the following 916-residue polypeptide: Protein translocase subunit SecA (916 aa).

Residues glutamine 87, 105-109 (GEGKT), and aspartate 512 contribute to the ATP site. The interval 857–916 (QHAEAPSMEQAVAGEDEELPEGPAPVVPLEPVRNEQKIGRNEPCPCGSGKKYKHCHGQLD) is disordered. Residues cysteine 900, cysteine 902, cysteine 911, and histidine 912 each contribute to the Zn(2+) site. Basic residues predominate over residues 906–916 (KKYKHCHGQLD).

Belongs to the SecA family. As to quaternary structure, monomer and homodimer. Part of the essential Sec protein translocation apparatus which comprises SecA, SecYEG and auxiliary proteins SecDF-YajC and YidC. The cofactor is Zn(2+).

The protein localises to the cell inner membrane. The protein resides in the cytoplasm. The enzyme catalyses ATP + H2O + cellular proteinSide 1 = ADP + phosphate + cellular proteinSide 2.. Part of the Sec protein translocase complex. Interacts with the SecYEG preprotein conducting channel. Has a central role in coupling the hydrolysis of ATP to the transfer of proteins into and across the cell membrane, serving both as a receptor for the preprotein-SecB complex and as an ATP-driven molecular motor driving the stepwise translocation of polypeptide chains across the membrane. The sequence is that of Protein translocase subunit SecA from Pseudomonas paraeruginosa (strain DSM 24068 / PA7) (Pseudomonas aeruginosa (strain PA7)).